The sequence spans 364 residues: Long-wave-sensitive opsin 1 (364 aa).

The Extracellular segment spans residues 1–52; the sequence is MAQRWGPQKLAGGQPQAGFEDSTQASIFTYTNNNATRDPFEGPNYHIAPRWV. Ser-22 carries an O-linked (GlcNAc) serine glycan. The N-linked (GlcNAc...) asparagine glycan is linked to Asn-34. A helical transmembrane segment spans residues 53 to 77; it reads YHVTSAWMIFVVIASVFTNGLVLAA. At 78–89 the chain is on the cytoplasmic side; that stretch reads TMRFKKLRHPLN. Residues 90-115 traverse the membrane as a helical segment; that stretch reads WILVNLAVADLAETIIASTISVVNQI. At 116-129 the chain is on the extracellular side; the sequence is YGYFVLGHPMCVVE. An intrachain disulfide couples Cys-126 to Cys-203. The chain crosses the membrane as a helical span at residues 130–149; it reads GYTVSLCGITGLWSLAIISW. Over 150–168 the chain is Cytoplasmic; it reads ERWMVVCKPFGNVRFDAKL. The chain crosses the membrane as a helical span at residues 169 to 192; it reads AVAGIAFSWIWAAVWTAPPIFGWS. Topologically, residues 193-218 are extracellular; it reads RYWPHGLKTSCGPDVFSGSSYPGVQS. Residues 219–246 traverse the membrane as a helical segment; sequence YMIVLMITCCIIPLSVIVLCYLQVWLAI. The Cytoplasmic portion of the chain corresponds to 247–268; the sequence is RAVAKQQKESESTQKAEKEVTR. A helical transmembrane segment spans residues 269-292; it reads MVMVMVFAFCLCWGPYTFFACFAA. At 293–300 the chain is on the extracellular side; the sequence is AHPGYAFH. The helical transmembrane segment at 301–325 threads the bilayer; sequence PLVAALPAYFAKSATIYNPIIYVFM. An N6-(retinylidene)lysine modification is found at Lys-312. At 326–364 the chain is on the cytoplasmic side; it reads NRQFRNCILQLFGKKVDDSSELSSVSKTEASSVSSVSPA.

This sequence belongs to the G-protein coupled receptor 1 family. Opsin subfamily. Post-translationally, phosphorylated on some or all of the serine and threonine residues present in the C-terminal region. The three color pigments are found in the cone photoreceptor cells. Expressed in retina.

The protein localises to the membrane. In terms of biological role, visual pigments are the light-absorbing molecules that mediate vision. They consist of an apoprotein, opsin, covalently linked to cis-retinal. This chain is Long-wave-sensitive opsin 1 (OPN1LW), found in Equus caballus (Horse).